The following is a 191-amino-acid chain: Stress response regulator protein 1 (191 aa).

Positions 62–181 constitute a Response regulatory domain; that stretch reads SFLLVDDNEI…TNYILQKIEQ (120 aa). D114 carries the post-translational modification 4-aspartylphosphate.

In terms of biological role, required for stress adaptation, morphogenesis and virulence. This Clavispora lusitaniae (strain ATCC 42720) (Yeast) protein is Stress response regulator protein 1 (SRR1).